The sequence spans 325 residues: Aspartate carbamoyltransferase catalytic subunit (325 aa).

Positions 55 and 56 each coordinate carbamoyl phosphate. L-aspartate is bound at residue K83. 3 residues coordinate carbamoyl phosphate: R105, H135, and Q138. 2 residues coordinate L-aspartate: R176 and R230. Positions 271 and 272 each coordinate carbamoyl phosphate.

It belongs to the aspartate/ornithine carbamoyltransferase superfamily. ATCase family. Heterododecamer (2C3:3R2) of six catalytic PyrB chains organized as two trimers (C3), and six regulatory PyrI chains organized as three dimers (R2).

It catalyses the reaction carbamoyl phosphate + L-aspartate = N-carbamoyl-L-aspartate + phosphate + H(+). The protein operates within pyrimidine metabolism; UMP biosynthesis via de novo pathway; (S)-dihydroorotate from bicarbonate: step 2/3. Functionally, catalyzes the condensation of carbamoyl phosphate and aspartate to form carbamoyl aspartate and inorganic phosphate, the committed step in the de novo pyrimidine nucleotide biosynthesis pathway. The polypeptide is Aspartate carbamoyltransferase catalytic subunit (Streptomyces avermitilis (strain ATCC 31267 / DSM 46492 / JCM 5070 / NBRC 14893 / NCIMB 12804 / NRRL 8165 / MA-4680)).